The primary structure comprises 394 residues: Elongation factor Tu 1 (394 aa).

A tr-type G domain is found at 10-204; it reads KPHVNVGTIG…FLDSYIPEPE (195 aa). The interval 19–26 is G1; the sequence is GHVDHGKT. GTP is bound at residue 19–26; sequence GHVDHGKT. Position 26 (threonine 26) interacts with Mg(2+). The segment at 60–64 is G2; sequence GITIN. Positions 81–84 are G3; sequence DCPG. GTP contacts are provided by residues 81–85 and 136–139; these read DCPGH and NKCD. Residues 136 to 139 form a G4 region; sequence NKCD. A G5 region spans residues 174 to 176; it reads SAL.

The protein belongs to the TRAFAC class translation factor GTPase superfamily. Classic translation factor GTPase family. EF-Tu/EF-1A subfamily. As to quaternary structure, monomer.

It localises to the cytoplasm. It catalyses the reaction GTP + H2O = GDP + phosphate + H(+). Functionally, GTP hydrolase that promotes the GTP-dependent binding of aminoacyl-tRNA to the A-site of ribosomes during protein biosynthesis. This chain is Elongation factor Tu 1, found in Shigella sonnei (strain Ss046).